A 386-amino-acid chain; its full sequence is Cytochrome b (386 aa).

4 helical membrane-spanning segments follow: residues 32-52, 76-98, 113-133, and 179-199; these read FGSL…TLAM, WLIR…LHMG, TWNI…LGYV, and FFSL…MHLI. Residues His82 and His96 each contribute to the heme b site. 2 residues coordinate heme b: His183 and His197. His202 contacts a ubiquinone. 4 helical membrane passes run 226-246, 290-310, 322-342, and 349-369; these read FLFK…IFVL, TLGV…PYLD, LSKI…ILGA, and FIIF…IITP.

This sequence belongs to the cytochrome b family. As to quaternary structure, fungal cytochrome b-c1 complex contains 10 subunits; 3 respiratory subunits, 2 core proteins and 5 low-molecular weight proteins. Cytochrome b-c1 complex is a homodimer. It depends on heme b as a cofactor.

It is found in the mitochondrion inner membrane. Component of the ubiquinol-cytochrome c reductase complex (complex III or cytochrome b-c1 complex) that is part of the mitochondrial respiratory chain. The b-c1 complex mediates electron transfer from ubiquinol to cytochrome c. Contributes to the generation of a proton gradient across the mitochondrial membrane that is then used for ATP synthesis. The protein is Cytochrome b (COB) of Trichophyton rubrum (Athlete's foot fungus).